The following is a 931-amino-acid chain: MAEAEAAQLKEEGNRHFQLQDYKAATKSYSQALKLTKDKALLATLYRNRAACGLKMESYAQAASDASRAIDINSADIKALYRRCQALEHLGKLDQAFKDVQRCATLEPRNQNFQETLRRLNTSIQEQLRVQFSTDSRVQTMFEILLNENSEADKREKAANNLIVLGREEAGAERIFQSNGVALLLQLMNTQRPELLLAAVRTLSGMCSGHRARATAILHAVRIDRICSLMALENEEMSLAVCNLLQAIIDSLSGEDKREHRGKEEALVLDTKKDLKQITSHLLDMLVSKKVSGQGRDQALNLLNKNVPRKDLSIHDNSRTIYVVDNGLRKILKVVGQVPDLPSCLPLTDNTRMLASILINKLYDDLRCDPERDHFRKICEEYITSKFDPQDMDKNVNAIQTVSGILQGPFDLGNQLLGMKGVMEMMVALCGSEREADQLVAVEALIHASTKLSRATFIITNGVTLLKQIYKTTKNEKIKIRTLVGLCKLGSAGGSDYGLRQFAEGSTEKLAKQCRKWLCNTAIDTRTRRWAVEGLAYLTLDADVKDDFVQDIPALQAMFELAKARTSDKTILYSVANTLVNCTNSYDVKEVVPELVQLAKFSKQHVPEEHPKDKKDFVDLRVKRLLKAGVISALACMVKADSAILTDQTKELLARVFLALCDNPKDRGTIVAQGGGKALIPLALEGTDVGKVKAAHGLAKIAAVSNPDIAFPGERVYEVVRPLVSLLDTQRDGLQNYEALLGLTNLSGRSDKLRQKIFKEKALPDIENYMFENHDQLRQAATECMCNMVLNKEVQERFLADGNDRLKLVVLLCGEDDHKLQNAAAGALAMLTAAHKKLCLKMTEVTTQWLEILQRLCLHDQLSVQHRGLVIAHNLLSADAELARKLVESELLEILTVVGKQEPDEKRAAVVQTARECLIKCMDYGFIKPVS.

TPR repeat units follow at residues Ala-6 to Lys-39, Ala-43 to Asp-76, and Ile-77 to Asn-110. ARM repeat units follow at residues Glu-169 to Ser-208, Arg-211 to Asp-250, and Asp-751 to Leu-790.

In terms of assembly, interacts with HSP90 in an ATP-independent manner. Interacts with UBE4B; the interaction may target UNC45B for proteasomal degradation. In terms of tissue distribution, highly expressed in adult skeletal muscle and heart. Detected at intermediate levels in lung. Highly expressed in embryonic heart.

Its subcellular location is the cytoplasm. It localises to the myofibril. It is found in the sarcomere. The protein localises to the z line. The protein resides in the a band. Its subcellular location is the perinuclear region. It localises to the cytosol. Functionally, acts as a co-chaperone for HSP90 and is required for proper folding of the myosin motor domain. Plays a role in sarcomere formation during muscle cell development. Is necessary for normal early lens development. The sequence is that of Protein unc-45 homolog B (Unc45b) from Mus musculus (Mouse).